A 248-amino-acid chain; its full sequence is Eukaryotic translation initiation factor 6 (248 aa).

This sequence belongs to the eIF-6 family. As to quaternary structure, monomer. Associates with the 60S ribosomal subunit.

It is found in the cytoplasm. The protein resides in the nucleus. It localises to the nucleolus. Binds to the 60S ribosomal subunit and prevents its association with the 40S ribosomal subunit to form the 80S initiation complex in the cytoplasm. May also be involved in ribosome biogenesis. This is Eukaryotic translation initiation factor 6 from Trypanosoma cruzi (strain CL Brener).